A 242-amino-acid chain; its full sequence is Biosynthetic peptidoglycan transglycosylase (242 aa).

Residues 19-39 traverse the membrane as a helical segment; it reads LMVVLAIFWGGGIALFSVAPV.

This sequence belongs to the glycosyltransferase 51 family.

It localises to the cell inner membrane. It carries out the reaction [GlcNAc-(1-&gt;4)-Mur2Ac(oyl-L-Ala-gamma-D-Glu-L-Lys-D-Ala-D-Ala)](n)-di-trans,octa-cis-undecaprenyl diphosphate + beta-D-GlcNAc-(1-&gt;4)-Mur2Ac(oyl-L-Ala-gamma-D-Glu-L-Lys-D-Ala-D-Ala)-di-trans,octa-cis-undecaprenyl diphosphate = [GlcNAc-(1-&gt;4)-Mur2Ac(oyl-L-Ala-gamma-D-Glu-L-Lys-D-Ala-D-Ala)](n+1)-di-trans,octa-cis-undecaprenyl diphosphate + di-trans,octa-cis-undecaprenyl diphosphate + H(+). The protein operates within cell wall biogenesis; peptidoglycan biosynthesis. Its function is as follows. Peptidoglycan polymerase that catalyzes glycan chain elongation from lipid-linked precursors. This chain is Biosynthetic peptidoglycan transglycosylase, found in Escherichia coli O81 (strain ED1a).